We begin with the raw amino-acid sequence, 433 residues long: Xylose isomerase (433 aa).

Residues His99 and Asp102 contribute to the active site. The Mg(2+) site is built by Glu230, Glu266, His269, Asp294, Asp305, Asp307, and Asp337.

This sequence belongs to the xylose isomerase family. In terms of assembly, homotetramer. Mg(2+) is required as a cofactor.

It is found in the cytoplasm. It catalyses the reaction alpha-D-xylose = alpha-D-xylulofuranose. The protein is Xylose isomerase of Roseobacter denitrificans (strain ATCC 33942 / OCh 114) (Erythrobacter sp. (strain OCh 114)).